Reading from the N-terminus, the 136-residue chain is MAKAEHTSTAKPSKPAAPERVAAFRTGLSAEARAAALLIAKGYRILAKRFRTPHGEIDIIARKRDLVTFVEVKARASLDDAAYAVTPRQQQRIIDAAQAWLMTHPEHAEFELRFDAILVAPRSLPRHLIAAFDAST.

This sequence belongs to the UPF0102 family.

The chain is UPF0102 protein BBta_0181 from Bradyrhizobium sp. (strain BTAi1 / ATCC BAA-1182).